We begin with the raw amino-acid sequence, 145 residues long: Large ribosomal subunit protein uL15 (145 aa).

Positions methionine 1–glutamate 50 are disordered. Residues arginine 20 to serine 30 are compositionally biased toward gly residues.

The protein belongs to the universal ribosomal protein uL15 family. In terms of assembly, part of the 50S ribosomal subunit.

In terms of biological role, binds to the 23S rRNA. The protein is Large ribosomal subunit protein uL15 of Phytoplasma australiense.